A 165-amino-acid polypeptide reads, in one-letter code: UPF0254 protein MmarC6_1720 (165 aa).

It belongs to the UPF0254 family.

The polypeptide is UPF0254 protein MmarC6_1720 (Methanococcus maripaludis (strain C6 / ATCC BAA-1332)).